We begin with the raw amino-acid sequence, 395 residues long: 1-deoxy-D-xylulose 5-phosphate reductoisomerase (395 aa).

Thr15, Gly16, Ser17, Ile18, Gly41, Asn43, and Asn126 together coordinate NADPH. Lys127 contacts 1-deoxy-D-xylulose 5-phosphate. Residue Glu128 coordinates NADPH. Position 152 (Asp152) interacts with Mn(2+). Residues Ser153, Glu154, Ser178, and His201 each coordinate 1-deoxy-D-xylulose 5-phosphate. Glu154 provides a ligand contact to Mn(2+). Position 207 (Gly207) interacts with NADPH. Positions 214, 219, 220, and 223 each coordinate 1-deoxy-D-xylulose 5-phosphate. Position 223 (Glu223) interacts with Mn(2+).

Belongs to the DXR family. Mg(2+) serves as cofactor. The cofactor is Mn(2+).

It catalyses the reaction 2-C-methyl-D-erythritol 4-phosphate + NADP(+) = 1-deoxy-D-xylulose 5-phosphate + NADPH + H(+). The protein operates within isoprenoid biosynthesis; isopentenyl diphosphate biosynthesis via DXP pathway; isopentenyl diphosphate from 1-deoxy-D-xylulose 5-phosphate: step 1/6. Catalyzes the NADPH-dependent rearrangement and reduction of 1-deoxy-D-xylulose-5-phosphate (DXP) to 2-C-methyl-D-erythritol 4-phosphate (MEP). In Ruegeria sp. (strain TM1040) (Silicibacter sp.), this protein is 1-deoxy-D-xylulose 5-phosphate reductoisomerase.